A 393-amino-acid chain; its full sequence is Formate-dependent phosphoribosylglycinamide formyltransferase (393 aa).

Residues 22–23 (EL) and glutamate 82 each bind N(1)-(5-phospho-beta-D-ribosyl)glycinamide. Residues arginine 114, lysine 155, 160 to 165 (SSGHGQ), 195 to 198 (EGFI), and glutamate 203 each bind ATP. The ATP-grasp domain maps to 119–308 (RLAAEELGLK…QFALHARAIL (190 aa)). Positions 267 and 279 each coordinate Mg(2+). Residues aspartate 286, lysine 356, and 363–364 (RR) each bind N(1)-(5-phospho-beta-D-ribosyl)glycinamide.

This sequence belongs to the PurK/PurT family. Homodimer.

It catalyses the reaction N(1)-(5-phospho-beta-D-ribosyl)glycinamide + formate + ATP = N(2)-formyl-N(1)-(5-phospho-beta-D-ribosyl)glycinamide + ADP + phosphate + H(+). It participates in purine metabolism; IMP biosynthesis via de novo pathway; N(2)-formyl-N(1)-(5-phospho-D-ribosyl)glycinamide from N(1)-(5-phospho-D-ribosyl)glycinamide (formate route): step 1/1. Functionally, involved in the de novo purine biosynthesis. Catalyzes the transfer of formate to 5-phospho-ribosyl-glycinamide (GAR), producing 5-phospho-ribosyl-N-formylglycinamide (FGAR). Formate is provided by PurU via hydrolysis of 10-formyl-tetrahydrofolate. This is Formate-dependent phosphoribosylglycinamide formyltransferase from Actinobacillus pleuropneumoniae serotype 5b (strain L20).